The sequence spans 173 residues: CKLF-like MARVEL transmembrane domain-containing protein 8 (173 aa).

In terms of domain architecture, MARVEL spans 36-168; the sequence is FLRTLPGLLI…NTYFSFIAWR (133 aa). The next 4 membrane-spanning stretches (helical) occupy residues 40–60, 70–90, 105–125, and 147–167; these read LPGLLIVAEIVLGLLVWTLIA, FGWVMFVAVFYWVLTVFFLII, TTVGLWFNGSAFALYLSAAIV, and FFAFLVTICYAGNTYFSFIAW.

It belongs to the chemokine-like factor family.

The protein resides in the membrane. This Bos taurus (Bovine) protein is CKLF-like MARVEL transmembrane domain-containing protein 8 (CMTM8).